The chain runs to 150 residues: UPF0756 membrane protein A1S_2121 (150 aa).

Transmembrane regions (helical) follow at residues 22–42 (SQNAAVTIAAGILIVIKITPL), 45–65 (FFPYIQAHGLNLGILILTIGV), 83–103 (FISFKSLVAIAIGLLVAWLGG), and 115–135 (VVAGLLIGTVAGVALLRGVPV).

It belongs to the UPF0756 family.

The protein resides in the cell membrane. This chain is UPF0756 membrane protein A1S_2121, found in Acinetobacter baumannii (strain ATCC 17978 / DSM 105126 / CIP 53.77 / LMG 1025 / NCDC KC755 / 5377).